A 79-amino-acid chain; its full sequence is Mipartoxin-3 (79 aa).

An N-terminal signal peptide occupies residues 1–21; it reads MKTLLLTLVVVTIVCLDLGNS. Intrachain disulfides connect Cys24–Cys41, Cys34–Cys59, Cys63–Cys71, and Cys72–Cys77.

Belongs to the three-finger toxin family. Short-chain subfamily. Expressed by the venom gland.

The protein resides in the secreted. Snake venom neurotoxin that blocks neuromuscular transmission, presenting a postsynaptic action through the nicotinic acetylcholine receptor (nAChR). Has no cytotoxic activity. This chain is Mipartoxin-3, found in Micrurus mipartitus (Red-tailed coral snake).